A 652-amino-acid polypeptide reads, in one-letter code: Sciellin (652 aa).

Over residues 1–10 (MSNFSSRKKS) the composition is skewed to basic residues. Disordered stretches follow at residues 1–29 (MSNF…QQGF) and 43–180 (SWIK…KPLG). Basic and acidic residues predominate over residues 66–95 (NSHDALDRKLIERDEPKATISRYRSEDMLD). At Lys82 the chain carries N6-acetyllysine. Over residues 97-110 (TLSSFRTPQSTKTP) the composition is skewed to polar residues. A compositionally biased stretch (low complexity) spans 111 to 130 (AVSSFNANTTATASTPATTP). The span at 161–170 (LHPPLPPKPC) shows a compositional bias: pro residues. 15 repeat units span residues 207-226 (TEDL…TDKG), 227-241 (EELD…SLNR), 242-261 (NQGL…LDKR), 262-281 (AQSL…DGKG), 282-301 (NQAF…DRRS), 302-320 (QDLR…IGRR), 321-340 (KQDL…NMKR), 341-360 (GKSL…SNKG), 361-380 (GPSL…ANQR), 381-398 (DQDL…NRSS), 399-418 (QHSL…TTAR), 419-438 (HQDL…NNQR), 439-458 (NHDV…CEQS), 459-477 (EELD…NTNG), and 478-496 (GQDL…EKNG). Residues 207–496 (TEDLDDIIRV…VNSHVAEKNG (290 aa)) form a 15 X approximate tandem repeats region. A Phosphoserine modification is found at Ser264. Phosphoserine is present on Ser343. The disordered stretch occupies residues 353–385 (EVNRSNKGGPSLDNFTKGVPARSRANQRDQDLD). The interval 436-455 (NQRNHDVDSTIRGNPTGTRC) is disordered. Over residues 446 to 455 (IRGNPTGTRC) the composition is skewed to polar residues. The 67-residue stretch at 583 to 649 (DMCTYCRKPL…EPCYSKVMAK (67 aa)) folds into the LIM zinc-binding domain.

In terms of tissue distribution, expressed in the upper layers of stratified epithelia, including, ependyma and choroid plexus of the brain ventricles.

It is found in the cytoplasm. The protein resides in the membrane. May function in the assembly or regulation of proteins in the cornified envelope. The LIM domain may be involved in homotypic or heterotypic associations and may function to localize sciellin to the cornified envelope. In Mus musculus (Mouse), this protein is Sciellin (Scel).